Reading from the N-terminus, the 644-residue chain is Heat shock protein SSC3, mitochondrial (644 aa).

Belongs to the heat shock protein 70 family.

Its subcellular location is the mitochondrion matrix. The protein localises to the mitochondrion nucleoid. Functionally, plays a role in facilitating the assembly of some protein complexes inside the mitochondria. It may initiate the events that lead to refolding of imported precursors in the matrix space. The chain is Heat shock protein SSC3, mitochondrial (ECM10) from Saccharomyces cerevisiae (strain ATCC 204508 / S288c) (Baker's yeast).